The following is a 512-amino-acid chain: Reduced folate transporter (512 aa).

N-acetylmethionine is present on Met1. Topologically, residues 1 to 29 (MVPTGQVAEKQACEEPRQDRELKSWRWLV) are cytoplasmic. The helical transmembrane segment at 30 to 50 (FYLCFFGFMAQLRPGESFITP) threads the bilayer. Ile48 and Thr49 together coordinate folate. Over 51–62 (YLLERNFTKEQV) the chain is Extracellular. Asn56 is a glycosylation site (N-linked (GlcNAc...) asparagine). A helical membrane pass occupies residues 63 to 85 (TNEIIPMLPYSHLAVLVPIFLLT). The Cytoplasmic segment spans residues 86-89 (DYLR). The chain crosses the membrane as a helical span at residues 90–110 (YKPVLVLQCLSFVCVWLLLLL). The Extracellular portion of the chain corresponds to 111-114 (GTSV). A helical membrane pass occupies residues 115-137 (VHMQLMEVFYSITMAARIAYSSY). Folate contacts are provided by Glu121 and Arg131. Residues 138–151 (IFSLVQPSRYQRMA) are Cytoplasmic-facing. A helical membrane pass occupies residues 152 to 176 (SYSRAAVLLGVFISSVLGQVLVTLG). Folate is bound at residue Val162. Residues 177 to 181 (GISTY) lie on the Extracellular side of the membrane. The helical transmembrane segment at 182 to 200 (MLNCISLGFILFSLSLSLF) threads the bilayer. Over 201-266 (LKRPKRSLFF…ELVKNVRQPQ (66 aa)) the chain is Cytoplasmic. The helical transmembrane segment at 267 to 292 (LRLWCLWWVFNSAGYYLITYYVHVLW) threads the bilayer. Residues Tyr281, Tyr282, and Tyr286 each coordinate folate. The Extracellular segment spans residues 293–300 (KITDSRLN). A helical transmembrane segment spans residues 301-323 (YNGAVDAASTLLSAITAFTAGFV). Topologically, residues 324-329 (NIRWAL) are cytoplasmic. The helical transmembrane segment at 330 to 350 (WSKLVIASVIAIQAGLVFCMF) threads the bilayer. Residues 351–353 (QIP) are Extracellular-facing. The helical transmembrane segment at 354–377 (DIWVCYVTFVLFRGAYQFLVPIAT) threads the bilayer. Residues Arg366 and Gln370 each coordinate folate. The Cytoplasmic segment spans residues 378 to 391 (FQIASSLSKELCAL). Residues 392-415 (VFGINTFLATALKTSITLVVSDKR) form a helical membrane-spanning segment. A required for substrate-binding region spans residues 400–412 (ATALKTSITLVVS). The Extracellular segment spans residues 416–423 (GLGLQVHQ). Residues 424 to 448 (QFRIYFMYFLTLSIICLAWAGLDGL) traverse the membrane as a helical segment. Over 449 to 512 (RYYRRGRHQP…RADLRVEAKA (64 aa)) the chain is Cytoplasmic. A phosphoserine mark is found at Ser466, Ser471, and Ser476. The segment at 479–512 (DGDLRRPQPSAPQLLPEDGSVEDGRADLRVEAKA) is disordered. The segment covering 500–512 (EDGRADLRVEAKA) has biased composition (basic and acidic residues).

This sequence belongs to the reduced folate carrier (RFC) transporter (TC 2.A.48) family. As to expression, expressed in liver, heart, brain, spleen, lung and skeletal muscle.

The protein localises to the cell membrane. Its subcellular location is the apical cell membrane. The protein resides in the basolateral cell membrane. It catalyses the reaction 5-amino-1-(5-phospho-beta-D-ribosyl)imidazole-4-carboxamide(in) + (6S)-5-methyl-5,6,7,8-tetrahydrofolate(out) = 5-amino-1-(5-phospho-beta-D-ribosyl)imidazole-4-carboxamide(out) + (6S)-5-methyl-5,6,7,8-tetrahydrofolate(in). In terms of biological role, antiporter that mediates the import of reduced folates, driven by the export of organic anions. Also acts as an importer of immunoreactive cyclic dinucleotides, but with a lower transporter activity. Mechanistically, acts as a secondary active transporter, which exports intracellular organic anions down their concentration gradients to facilitate the uptake of its substrates. Has high affinity for N5-methyltetrahydrofolate, the predominant circulating form of folate. Also mediates the import of antifolate drug methotrexate. 5-amino-4-imidazolecarboxamide riboside (AICAR), when phosphorylated to AICAR monophosphate, can serve as an organic anion for antiporter activity. This Rattus norvegicus (Rat) protein is Reduced folate transporter.